A 140-amino-acid polypeptide reads, in one-letter code: Nucleoside diphosphate kinase (140 aa).

Positions 11, 59, 87, 93, 104, and 114 each coordinate ATP. Residue His117 is the Pros-phosphohistidine intermediate of the active site.

Belongs to the NDK family. In terms of assembly, homotetramer. It depends on Mg(2+) as a cofactor.

The protein localises to the cytoplasm. The catalysed reaction is a 2'-deoxyribonucleoside 5'-diphosphate + ATP = a 2'-deoxyribonucleoside 5'-triphosphate + ADP. The enzyme catalyses a ribonucleoside 5'-diphosphate + ATP = a ribonucleoside 5'-triphosphate + ADP. In terms of biological role, major role in the synthesis of nucleoside triphosphates other than ATP. The ATP gamma phosphate is transferred to the NDP beta phosphate via a ping-pong mechanism, using a phosphorylated active-site intermediate. The chain is Nucleoside diphosphate kinase from Methylorubrum extorquens (strain CM4 / NCIMB 13688) (Methylobacterium extorquens).